A 378-amino-acid chain; its full sequence is Chaperone protein DnaJ (378 aa).

The region spanning 5–69 (EFYDRLGVSK…QKRAAYDQYG (65 aa)) is the J domain. The CR-type zinc-finger motif lies at 135–217 (GTEKEVKYHR…CHGTGHEKQA (83 aa)). Zn(2+) contacts are provided by cysteine 148, cysteine 151, cysteine 165, cysteine 168, cysteine 191, cysteine 194, cysteine 205, and cysteine 208. CXXCXGXG motif repeat units follow at residues 148-155 (CRTCNGSG), 165-172 (CGRCHGAG), 191-198 (CDVCHGRG), and 205-212 (CTTCHGTG).

The protein belongs to the DnaJ family. As to quaternary structure, homodimer. Zn(2+) serves as cofactor.

Its subcellular location is the cytoplasm. Participates actively in the response to hyperosmotic and heat shock by preventing the aggregation of stress-denatured proteins and by disaggregating proteins, also in an autonomous, DnaK-independent fashion. Unfolded proteins bind initially to DnaJ; upon interaction with the DnaJ-bound protein, DnaK hydrolyzes its bound ATP, resulting in the formation of a stable complex. GrpE releases ADP from DnaK; ATP binding to DnaK triggers the release of the substrate protein, thus completing the reaction cycle. Several rounds of ATP-dependent interactions between DnaJ, DnaK and GrpE are required for fully efficient folding. Also involved, together with DnaK and GrpE, in the DNA replication of plasmids through activation of initiation proteins. This Streptococcus pneumoniae serotype 4 (strain ATCC BAA-334 / TIGR4) protein is Chaperone protein DnaJ.